Consider the following 476-residue polypeptide: Retinoic acid receptor gamma (476 aa).

Positions 1 to 109 are modulating; the sequence is MANSSKERLC…PPPPPRVYKP (109 aa). Residues 81–96 are compositionally biased toward low complexity; the sequence is STVETQSTSSEEMVPS. The interval 81–102 is disordered; it reads STVETQSTSSEEMVPSSPSPPP. NR C4-type zinc fingers lie at residues 110–130 and 146–170; these read CFVC…CEGC and CHRD…LQKC. Residues 110-175 constitute a DNA-binding region (nuclear receptor); it reads CFVCNDKSSG…RLQKCFQVGM (66 aa). The interval 176–205 is hinge; the sequence is SKEAVRNDRNKKKKEIKEEVVLPDSYEMPP. The Nuclear localization signal signature appears at 184 to 189; the sequence is RNKKKK. Residues 206-440 enclose the NR LBD domain; it reads EMEELIQKVS…PLIREMLENP (235 aa). The tract at residues 435 to 476 is disordered; the sequence is EMLENPEAFEDGAATPKPSERSSSESSNGSPTGEDSSGSKTP. The segment covering 462–476 has biased composition (polar residues); that stretch reads NGSPTGEDSSGSKTP.

The protein belongs to the nuclear hormone receptor family. NR1 subfamily. Heterodimer; with a rxr molecule. Binds DNA preferentially as a rar/rxr heterodimer. Expressed in embryos, tadpoles and various adult tissue such as kidney, testis, brain, liver, skeletal muscle and spleen.

It is found in the nucleus. Its function is as follows. Receptor for retinoic acid. Retinoic acid receptors bind as heterodimers to their target response elements in response to their ligands, all-trans or 9-cis retinoic acid, and regulate gene expression in various biological processes. The rar/rxr heterodimers bind to the retinoic acid response elements (RARE) composed of tandem 5'-AGGTCA-3' sites known as DR1-DR5. This Xenopus laevis (African clawed frog) protein is Retinoic acid receptor gamma (rarg).